Consider the following 592-residue polypeptide: Arginine--tRNA ligase (592 aa).

Residues 134-144 carry the 'HIGH' region motif; sequence ANPTGPLHVGH.

The protein belongs to the class-I aminoacyl-tRNA synthetase family. In terms of assembly, monomer.

Its subcellular location is the cytoplasm. The enzyme catalyses tRNA(Arg) + L-arginine + ATP = L-arginyl-tRNA(Arg) + AMP + diphosphate. In Coxiella burnetii (strain CbuK_Q154) (Coxiella burnetii (strain Q154)), this protein is Arginine--tRNA ligase.